The chain runs to 342 residues: Flap endonuclease 1 (342 aa).

The N-domain stretch occupies residues 1-99 (MGVKIGELIE…RAIEERVRAR (99 aa)). The Mg(2+) site is built by Asp-28, Asp-81, Glu-153, Glu-155, Asp-174, Asp-176, and Asp-237. The I-domain stretch occupies residues 117-259 (EARKYAQAAL…RALELVKKYK (143 aa)).

This sequence belongs to the XPG/RAD2 endonuclease family. FEN1 subfamily. As to quaternary structure, interacts with PCNA. PCNA stimulates the nuclease activity without altering cleavage specificity. It depends on Mg(2+) as a cofactor.

Functionally, structure-specific nuclease with 5'-flap endonuclease and 5'-3' exonuclease activities involved in DNA replication and repair. During DNA replication, cleaves the 5'-overhanging flap structure that is generated by displacement synthesis when DNA polymerase encounters the 5'-end of a downstream Okazaki fragment. Binds the unpaired 3'-DNA end and kinks the DNA to facilitate 5' cleavage specificity. Cleaves one nucleotide into the double-stranded DNA from the junction in flap DNA, leaving a nick for ligation. Also involved in the base excision repair (BER) pathway. Acts as a genome stabilization factor that prevents flaps from equilibrating into structures that lead to duplications and deletions. Also possesses 5'-3' exonuclease activity on nicked or gapped double-stranded DNA. The protein is Flap endonuclease 1 of Korarchaeum cryptofilum (strain OPF8).